A 246-amino-acid chain; its full sequence is Mast cell protease-like protein (246 aa).

Positions 1-18 (MQALLFLMALLLPSGAGA) are cleaved as a signal peptide. The propeptide at 19–20 (EE) is activation peptide. In terms of domain architecture, Peptidase S1 spans 21-244 (IIGGVESEPH…HVPWINRVIK (224 aa)). A disulfide bridge connects residues cysteine 50 and cysteine 66. Residues histidine 65 and aspartate 109 each act as charge relay system in the active site. Disulfide bonds link cysteine 143/cysteine 208 and cysteine 174/cysteine 187. The Charge relay system role is filled by serine 202.

This sequence belongs to the peptidase S1 family. Granzyme subfamily.

This is Mast cell protease-like protein (Mcptl) from Mus musculus (Mouse).